Consider the following 288-residue polypeptide: 4-diphosphocytidyl-2-C-methyl-D-erythritol kinase (288 aa).

Lysine 13 is an active-site residue. Residue 96–106 (PMGGGIGGGSS) participates in ATP binding. The active site involves aspartate 138.

This sequence belongs to the GHMP kinase family. IspE subfamily.

It catalyses the reaction 4-CDP-2-C-methyl-D-erythritol + ATP = 4-CDP-2-C-methyl-D-erythritol 2-phosphate + ADP + H(+). It functions in the pathway isoprenoid biosynthesis; isopentenyl diphosphate biosynthesis via DXP pathway; isopentenyl diphosphate from 1-deoxy-D-xylulose 5-phosphate: step 3/6. Functionally, catalyzes the phosphorylation of the position 2 hydroxy group of 4-diphosphocytidyl-2C-methyl-D-erythritol. The protein is 4-diphosphocytidyl-2-C-methyl-D-erythritol kinase of Aliivibrio fischeri (strain ATCC 700601 / ES114) (Vibrio fischeri).